Consider the following 306-residue polypeptide: Putative S-adenosyl-L-methionine-dependent methyltransferase MAP_4190c (306 aa).

Residues D129 and 158–159 (DL) each bind S-adenosyl-L-methionine.

The protein belongs to the UPF0677 family.

Exhibits S-adenosyl-L-methionine-dependent methyltransferase activity. The polypeptide is Putative S-adenosyl-L-methionine-dependent methyltransferase MAP_4190c (Mycolicibacterium paratuberculosis (strain ATCC BAA-968 / K-10) (Mycobacterium paratuberculosis)).